We begin with the raw amino-acid sequence, 145 residues long: Transcription antitermination protein NusB (145 aa).

It belongs to the NusB family.

Its function is as follows. Involved in transcription antitermination. Required for transcription of ribosomal RNA (rRNA) genes. Binds specifically to the boxA antiterminator sequence of the ribosomal RNA (rrn) operons. The chain is Transcription antitermination protein NusB from Geotalea uraniireducens (strain Rf4) (Geobacter uraniireducens).